A 259-amino-acid chain; its full sequence is 3-deoxy-manno-octulosonate cytidylyltransferase (259 aa).

It belongs to the KdsB family.

It localises to the cytoplasm. It carries out the reaction 3-deoxy-alpha-D-manno-oct-2-ulosonate + CTP = CMP-3-deoxy-beta-D-manno-octulosonate + diphosphate. It participates in nucleotide-sugar biosynthesis; CMP-3-deoxy-D-manno-octulosonate biosynthesis; CMP-3-deoxy-D-manno-octulosonate from 3-deoxy-D-manno-octulosonate and CTP: step 1/1. Its pathway is bacterial outer membrane biogenesis; lipopolysaccharide biosynthesis. Activates KDO (a required 8-carbon sugar) for incorporation into bacterial lipopolysaccharide in Gram-negative bacteria. This Aeromonas salmonicida (strain A449) protein is 3-deoxy-manno-octulosonate cytidylyltransferase.